The primary structure comprises 338 residues: 2,3-dihydroxybenzoate decarboxylase (338 aa).

Cys-251 is an active-site residue.

The protein belongs to the metallo-dependent hydrolases superfamily. Homotetramer.

The catalysed reaction is 2,3-dihydroxybenzoate + H(+) = catechol + CO2. Its pathway is aromatic compound metabolism; benzoate degradation via hydroxylation. Its function is as follows. Has an absolute substrate specificity for 2,3-DHBA. This Aspergillus oryzae (strain ATCC 42149 / RIB 40) (Yellow koji mold) protein is 2,3-dihydroxybenzoate decarboxylase.